The sequence spans 163 residues: Small ribosomal subunit protein eS10A (163 aa).

A disordered region spans residues 92-163 (LTQTTRSNAV…GFGRASRYDN (72 aa)). Over residues 105–116 (GGPGGPGGGFGG) the composition is skewed to gly residues.

Belongs to the eukaryotic ribosomal protein eS10 family.

Its subcellular location is the cytoplasm. The chain is Small ribosomal subunit protein eS10A (RpS10a) from Drosophila melanogaster (Fruit fly).